Here is a 539-residue protein sequence, read N- to C-terminus: Probable protein kinase UbiB (539 aa).

One can recognise a Protein kinase domain in the interval 125–493 (RFDVEPLASA…RRRQGDRWAL (369 aa)). ATP contacts are provided by residues 131–139 (LASASVAQV) and Lys-153. The active-site Proton acceptor is the Asp-288. The next 2 helical transmembrane spans lie at 495–515 (LLGAGLLGGGAVLAASAAEAA) and 517–537 (LAAPAAWPAWLMLAAGLYLIV).

Belongs to the ABC1 family. UbiB subfamily.

The protein localises to the cell inner membrane. It participates in cofactor biosynthesis; ubiquinone biosynthesis [regulation]. Functionally, is probably a protein kinase regulator of UbiI activity which is involved in aerobic coenzyme Q (ubiquinone) biosynthesis. In Pseudomonas putida (strain W619), this protein is Probable protein kinase UbiB.